The primary structure comprises 450 residues: FAD-dependent monooxygenase okaB (450 aa).

A helical membrane pass occupies residues 14 to 34 (IVIIIVGLGIAGLSAAIECHG). The FAD site is built by Glu-43 and Arg-116. The active site involves Arg-194. The FAD site is built by Asp-318 and Gly-331.

The protein belongs to the paxM FAD-dependent monooxygenase family.

It is found in the membrane. The catalysed reaction is cyclo(N(8)-(alpha,alpha-dimethylallyl)-L-Trp-6a-(alpha,alpha-dimethylallyl)-L-Trp) + AH2 + O2 = okaramine C + A + H2O. The protein operates within alkaloid biosynthesis. Its function is as follows. FAD-dependent monooxygenase; part of the gene cluster that mediates the biosynthesis of okaramine B, a prenylated indole alkaloid that possesses an unusual octacyclic ring system, including a four-membered azetidine ring and an eight-membered azocine ring, and that exhibits insecticidal activity against silkworm larvae. Within the pathway, okaC performs indole 2,3-epoxidation, facilitating the formation of the hexahydropyrrolo[2,3-b]indole (HPI) moiety of okaramine C. okaC then performs asymmetric reverse prenylation of cyclo(L-Trp-L-Trp) at N-1 and C-2' of the indole ring to produce the cyclic prenylated tryptophan dimer cyclo(N8-(alpha,alpha-dimethylallyl)-L-Trp-6a-(alpha,alpha-dime-thylallyl)-L-Trp). The biosynthesis begins with the NRPS okaA that condenses two tryptophan molecules into cyclo(L-Trp-L-Trp). Prenylation by the prenyltransferase okaC then leads to the formation of cyclo(N8-(alpha,alpha-dimethylallyl)-L-Trp-6a-(alpha,alpha-dime-thylallyl)-L-Trp). This is followed by indole 2,3-epoxidation by the FAD-dependent monooxygenase okaB to facilitate the formation of the hexahydropyrrolo[2,3-b]indole (HPI) moiety of okaramine C. The cytochrome P450 monooxygenase okaD then likely catalyzes formation of the eight-membered ring of okaramine A. The dioxygenase okaE further forms the unusual 2-dimethyl-3-methyl-azetidine ring to yield 12-deshydroxyl okaramine E, as well as the hydroxylation of 12-deshydroxyl okaramine E to produce okaramine E. The cytochrome P450 monoxygenase okaG converts 12-deshydroxyl okaramine E into 3-desmethyl okaramine B which is further methylated by the methyltransferase okaF into okaramine B. In a shunt pathway, okaG and okaF together are also able to convert okaramine E into okaramine D. Okaramine H is produced by nonenzymatic conversion from okaramine A. This is FAD-dependent monooxygenase okaB from Penicillium ochrochloron.